A 301-amino-acid polypeptide reads, in one-letter code: MDSTTLSQTPGSRVSQYIALTKPRVTQLAVFCAVIGMFLSTPGMVPWTPLIGGTVGIWLLAGAAFAINCLVEQKIDAKMRRTSWRPSARGEITTAQILLFSAVLGGLGMWTLYTFANPLTMWLTLATFVGYAVIYTLLLKPATPQNIVIGGASGAMPPALGWAAVTGHVPGDAWILVLIIFVWTPPHFWALALYRRKDYENAGLPMLPNTHGEKYTRLHILLYTVILFAVTMMPFISGMSGVVYLAAAVLLGALFLAYAWKIYREYSDDLARKTFRYSIVYLSLLFAALLIDHYARVLIGA.

Transmembrane regions (helical) follow at residues 25–45 (VTQL…PGMV), 47–67 (WTPL…AFAI), 97–117 (ILLF…TFAN), 119–139 (LTMW…TLLL), 147–167 (IVIG…AVTG), 173–193 (AWIL…ALAL), 235–255 (FISG…GALF), and 279–299 (IVYL…RVLI).

The protein belongs to the UbiA prenyltransferase family. Protoheme IX farnesyltransferase subfamily.

It is found in the cell inner membrane. It carries out the reaction heme b + (2E,6E)-farnesyl diphosphate + H2O = Fe(II)-heme o + diphosphate. It participates in porphyrin-containing compound metabolism; heme O biosynthesis; heme O from protoheme: step 1/1. Converts heme B (protoheme IX) to heme O by substitution of the vinyl group on carbon 2 of heme B porphyrin ring with a hydroxyethyl farnesyl side group. The polypeptide is Protoheme IX farnesyltransferase (Paraburkholderia xenovorans (strain LB400)).